A 136-amino-acid chain; its full sequence is Large ribosomal subunit protein eL27B (136 aa).

This sequence belongs to the eukaryotic ribosomal protein eL27 family. Component of the large ribosomal subunit (LSU). Mature yeast ribosomes consist of a small (40S) and a large (60S) subunit. The 40S small subunit contains 1 molecule of ribosomal RNA (18S rRNA) and at least 33 different proteins. The large 60S subunit contains 3 rRNA molecules (25S, 5.8S and 5S rRNA) and at least 46 different proteins.

The protein resides in the cytoplasm. Its function is as follows. Component of the ribosome, a large ribonucleoprotein complex responsible for the synthesis of proteins in the cell. The small ribosomal subunit (SSU) binds messenger RNAs (mRNAs) and translates the encoded message by selecting cognate aminoacyl-transfer RNA (tRNA) molecules. The large subunit (LSU) contains the ribosomal catalytic site termed the peptidyl transferase center (PTC), which catalyzes the formation of peptide bonds, thereby polymerizing the amino acids delivered by tRNAs into a polypeptide chain. The nascent polypeptides leave the ribosome through a tunnel in the LSU and interact with protein factors that function in enzymatic processing, targeting, and the membrane insertion of nascent chains at the exit of the ribosomal tunnel. The protein is Large ribosomal subunit protein eL27B (rpl2702) of Schizosaccharomyces pombe (strain 972 / ATCC 24843) (Fission yeast).